Consider the following 162-residue polypeptide: Cyclic pyranopterin monophosphate synthase (162 aa).

Substrate contacts are provided by residues 75-77 and 113-114; these read LCH and ME. Asp-128 is a catalytic residue.

The protein belongs to the MoaC family. Homohexamer; trimer of dimers.

The enzyme catalyses (8S)-3',8-cyclo-7,8-dihydroguanosine 5'-triphosphate = cyclic pyranopterin phosphate + diphosphate. The protein operates within cofactor biosynthesis; molybdopterin biosynthesis. In terms of biological role, catalyzes the conversion of (8S)-3',8-cyclo-7,8-dihydroguanosine 5'-triphosphate to cyclic pyranopterin monophosphate (cPMP). This is Cyclic pyranopterin monophosphate synthase from Burkholderia lata (strain ATCC 17760 / DSM 23089 / LMG 22485 / NCIMB 9086 / R18194 / 383).